A 307-amino-acid polypeptide reads, in one-letter code: Ribonuclease H2 subunit B (307 aa).

A2 carries the N-acetylalanine modification. K291 is modified (N6-acetyllysine). S292 is modified (phosphoserine).

It belongs to the RNase H2 subunit B family. As to quaternary structure, the RNase H2 complex is a heterotrimer composed of the catalytic subunit RNASEH2A and the non-catalytic subunits RNASEH2B and RNASEH2C.

It localises to the nucleus. Its function is as follows. Non catalytic subunit of RNase H2, an endonuclease that specifically degrades the RNA of RNA:DNA hybrids. Participates in DNA replication, possibly by mediating the removal of lagging-strand Okazaki fragment RNA primers during DNA replication. Mediates the excision of single ribonucleotides from DNA:RNA duplexes. The chain is Ribonuclease H2 subunit B (Rnaseh2b) from Rattus norvegicus (Rat).